Here is a 233-residue protein sequence, read N- to C-terminus: ATP synthase subunit C lysine N-methyltransferase (233 aa).

Position 1 is an N-acetylmethionine (M1). Residues 38–58 form a helical membrane-spanning segment; that stretch reads FLLTGLVGGTLVAVYAVATPF. Residues 56–90 form a required for mitochondrial location region; it reads TPFVTPALRKVCLPFVPATTKQIENVVKMLRCRRG.

Belongs to the ANT/ATPSC lysine N-methyltransferase family. As to expression, ubiquitously expressed.

It is found in the mitochondrion membrane. The catalysed reaction is L-lysyl-[protein] + 3 S-adenosyl-L-methionine = N(6),N(6),N(6)-trimethyl-L-lysyl-[protein] + 3 S-adenosyl-L-homocysteine + 3 H(+). Functionally, mitochondrial protein-lysine N-methyltransferase that trimethylates ATP synthase subunit C, ATP5MC1 and ATP5MC2. Trimethylation is required for proper incorporation of the C subunit into the ATP synthase complex and mitochondrial respiration. Promotes chronic pain. Involved in persistent inflammatory and neuropathic pain: methyltransferase activity in the mitochondria of sensory neurons promotes chronic pain via a pathway that depends on the production of reactive oxygen species (ROS) and on the engagement of spinal cord microglia. In Homo sapiens (Human), this protein is ATP synthase subunit C lysine N-methyltransferase.